The chain runs to 191 residues: Thymidylate kinase (191 aa).

An ATP-binding site is contributed by 7–14 (GVDGAGKS).

It belongs to the thymidylate kinase family.

It carries out the reaction dTMP + ATP = dTDP + ADP. Functionally, phosphorylation of dTMP to form dTDP in both de novo and salvage pathways of dTTP synthesis. This is Thymidylate kinase from Helicobacter pylori (strain Shi470).